The following is a 430-amino-acid chain: DNA polymerase IV 1 (430 aa).

A UmuC domain is found at 45–225; that stretch reads LAHIDCDAFY…KPVTLIWGVG (181 aa). 2 residues coordinate Mg(2+): Asp49 and Asp142. Residue Glu143 is part of the active site.

This sequence belongs to the DNA polymerase type-Y family. Monomer. Requires Mg(2+) as cofactor.

The protein localises to the cytoplasm. It catalyses the reaction DNA(n) + a 2'-deoxyribonucleoside 5'-triphosphate = DNA(n+1) + diphosphate. Functionally, poorly processive, error-prone DNA polymerase involved in untargeted mutagenesis. Copies undamaged DNA at stalled replication forks, which arise in vivo from mismatched or misaligned primer ends. These misaligned primers can be extended by PolIV. Exhibits no 3'-5' exonuclease (proofreading) activity. May be involved in translesional synthesis, in conjunction with the beta clamp from PolIII. This chain is DNA polymerase IV 1 (dinB1), found in Rhizobium meliloti (strain 1021) (Ensifer meliloti).